We begin with the raw amino-acid sequence, 213 residues long: Orotate phosphoribosyltransferase (213 aa).

K26 contacts 5-phospho-alpha-D-ribose 1-diphosphate. Position 34–35 (34–35 (FF)) interacts with orotate. 5-phospho-alpha-D-ribose 1-diphosphate-binding positions include 72–73 (YK), R99, K100, K103, H105, and 124–132 (DDVITAGTA). 2 residues coordinate orotate: T128 and R156.

The protein belongs to the purine/pyrimidine phosphoribosyltransferase family. PyrE subfamily. As to quaternary structure, homodimer. Mg(2+) is required as a cofactor.

It carries out the reaction orotidine 5'-phosphate + diphosphate = orotate + 5-phospho-alpha-D-ribose 1-diphosphate. Its pathway is pyrimidine metabolism; UMP biosynthesis via de novo pathway; UMP from orotate: step 1/2. Functionally, catalyzes the transfer of a ribosyl phosphate group from 5-phosphoribose 1-diphosphate to orotate, leading to the formation of orotidine monophosphate (OMP). This chain is Orotate phosphoribosyltransferase, found in Shigella flexneri serotype 5b (strain 8401).